Here is a 222-residue protein sequence, read N- to C-terminus: Ribose-5-phosphate isomerase A (222 aa).

Substrate-binding positions include 29-32 (TGST), 82-85 (DSAD), and 95-98 (KGGG). Glu104 serves as the catalytic Proton acceptor. Lys122 contacts substrate.

Belongs to the ribose 5-phosphate isomerase family. As to quaternary structure, homodimer.

The catalysed reaction is aldehydo-D-ribose 5-phosphate = D-ribulose 5-phosphate. Its pathway is carbohydrate degradation; pentose phosphate pathway; D-ribose 5-phosphate from D-ribulose 5-phosphate (non-oxidative stage): step 1/1. Its function is as follows. Catalyzes the reversible conversion of ribose-5-phosphate to ribulose 5-phosphate. The sequence is that of Ribose-5-phosphate isomerase A from Blochmanniella floridana.